The primary structure comprises 251 residues: Putative cysteine-rich repeat secretory protein 36 (251 aa).

A signal peptide spans 1-28; that stretch reads MHSSYSLSKCLVCFTILAIQTLIRRVSS. Gnk2-homologous domains are found at residues 35–139 and 144–248; these read YLNH…NSPP and YENT…LYPF.

It belongs to the cysteine-rich repeat secretory protein family.

It localises to the secreted. This chain is Putative cysteine-rich repeat secretory protein 36 (CRRSP36), found in Arabidopsis thaliana (Mouse-ear cress).